The primary structure comprises 230 residues: MQRGKKYRAHKEKVDSTKFFSIDKAVELAKSTSYTKFDGTLEIATKVNYKSLQNIRGTISLPHGTGKKIRVLVFCKGDKQNDAKAAGADFVGDTDLIEKVAGGWTDFDACVATPDMMKDVGKLGPILGRKGLMPKPKAGTVTTDVAKAVNELKAGRIEYRPDKGGVVHLGVGKVSFDNTKLIENIRTVVQTLMRDKPSDAKGEYLKTFSISPTMGVGVKVDVKELVNTSI.

It belongs to the universal ribosomal protein uL1 family. In terms of assembly, part of the 50S ribosomal subunit.

Functionally, binds directly to 23S rRNA. The L1 stalk is quite mobile in the ribosome, and is involved in E site tRNA release. In terms of biological role, protein L1 is also a translational repressor protein, it controls the translation of the L11 operon by binding to its mRNA. This is Large ribosomal subunit protein uL1 from Leptospira interrogans serogroup Icterohaemorrhagiae serovar copenhageni (strain Fiocruz L1-130).